Here is a 276-residue protein sequence, read N- to C-terminus: Secreted RxLR effector protein 85 (276 aa).

The first 27 residues, 1–27 (MRYCAFRLGLFFIGYSCCVLLSTPTLA), serve as a signal peptide directing secretion. The RxLR motif lies at 110 to 113 (RQLR).

This sequence belongs to the RxLR effector family.

It is found in the secreted. Its subcellular location is the host cell membrane. Secreted effector that partially suppresses the host cell death induced by cell death-inducing proteins. In Plasmopara viticola (Downy mildew of grapevine), this protein is Secreted RxLR effector protein 85.